The primary structure comprises 361 residues: Serpentine receptor class epsilon-32 (361 aa).

7 helical membrane-spanning segments follow: residues 34–54 (IIEL…LYVM), 66–86 (ILYI…LITI), 124–144 (LLIF…YGIL), 168–188 (IPIA…LSVL), 195–215 (FLSH…YLFI), 256–276 (LVFV…ALAF), and 286–306 (FVEN…MLTI).

It belongs to the nematode receptor-like protein sre family.

It localises to the membrane. In Caenorhabditis elegans, this protein is Serpentine receptor class epsilon-32 (sre-32).